Reading from the N-terminus, the 516-residue chain is Rho guanine nucleotide exchange factor 9 (516 aa).

An SH3 domain is found at 8–67 (DSIVSAEAVWDHVTMANRELAFKAGDVIKVLDASNKDWWWGQIDDEEGWFPASFVRLWVN). The segment at 100–110 (RDQMRANVINE) is interaction with GPHN. Residues 103-287 (MRANVINEIM…RNVTQQINER (185 aa)) form the DH domain. Residues 318–425 (ELIYTGEMAW…WLRAFREERK (108 aa)) form the PH domain. Residues 450 to 480 (RKASKQKGVNSARSVPPSYPPPQDPLNQGQY) form a disordered region. Phosphoserine is present on Ser502.

In terms of assembly, interacts with GPHN. As to expression, detected in embryonic and adult brain.

It localises to the cytoplasm. The protein localises to the postsynaptic density. Acts as a guanine nucleotide exchange factor (GEF) for CDC42. Promotes formation of GPHN clusters. The chain is Rho guanine nucleotide exchange factor 9 (Arhgef9) from Mus musculus (Mouse).